Reading from the N-terminus, the 1358-residue chain is DNA-directed RNA polymerase subunit beta (1358 aa).

Belongs to the RNA polymerase beta chain family. As to quaternary structure, the RNAP catalytic core consists of 2 alpha, 1 beta, 1 beta' and 1 omega subunit. When a sigma factor is associated with the core the holoenzyme is formed, which can initiate transcription.

The catalysed reaction is RNA(n) + a ribonucleoside 5'-triphosphate = RNA(n+1) + diphosphate. DNA-dependent RNA polymerase catalyzes the transcription of DNA into RNA using the four ribonucleoside triphosphates as substrates. This chain is DNA-directed RNA polymerase subunit beta, found in Azotobacter vinelandii (strain DJ / ATCC BAA-1303).